The chain runs to 522 residues: Cytochrome bd-I ubiquinol oxidase subunit 1 (522 aa).

Position 1 is an N-formylmethionine (Met1). The Cytoplasmic portion of the chain corresponds to 1–22 (MLDIVELSRLQFALTAMYHFLF). Residue His19 coordinates heme b. Residues 23–42 (VPLTLGMAFLLAIMETVYVL) form a helical membrane-spanning segment. The Periplasmic portion of the chain corresponds to 43–94 (SGKQIYKDMTKFWGKLFGINFALGVATGLTMEFQFGTNWSYYSHYVGDIFGA). A helical transmembrane segment spans residues 95–114 (PLAIEGLMAFFLESTFVGLF). Topologically, residues 115-129 (FFGWDRLGKVQHMCV) are cytoplasmic. The chain crosses the membrane as a helical span at residues 130–149 (TWLVALGSNLSALWILVANG). Over 150 to 187 (WMQNPIASDFNFETMRMEMVSFSELVLNPVAQVKFVHT) the chain is Periplasmic. His186 serves as a coordination point for heme b. A helical membrane pass occupies residues 188-207 (VASGYVTGAMFILGISAWYM). At 208 to 219 (LKGRDFAFAKRS) the chain is on the cytoplasmic side. A helical transmembrane segment spans residues 220–239 (FAIAASFGMAAVLSVIVLGD). Residues 240-392 (ESGYEMGDVQ…VAPLYFAFRI (153 aa)) lie on the Periplasmic side of the membrane. Met393 contacts heme b. The chain crosses the membrane as a helical span at residues 393-412 (MVACGFLLLAIIALSFWSVI). Residues 413–470 (RNRIGEKKWLLRAALYGIPLPWIAVEAGWFVAEYGRQPWAIGEVLPTAVANSSLTAGD) lie on the Cytoplasmic side of the membrane. The chain crosses the membrane as a helical span at residues 471 to 490 (LIFSMVLICGLYTLFLVAEL). Residues 491-522 (FLMFKFARLGPSSLKTGRYHFEQSSTTTQPAR) lie on the Periplasmic side of the membrane.

The protein belongs to the cytochrome ubiquinol oxidase subunit 1 family. In terms of assembly, heterodimer of subunits I and II. Heme b serves as cofactor. It depends on heme d cis-diol as a cofactor.

It localises to the cell inner membrane. The catalysed reaction is 2 a ubiquinol + O2(in) + 4 H(+)(in) = 2 a ubiquinone + 2 H2O(in) + 4 H(+)(out). Its pathway is energy metabolism; oxidative phosphorylation. Its function is as follows. A terminal oxidase that produces a proton motive force by the vectorial transfer of protons across the inner membrane. It is the component of the aerobic respiratory chain of E.coli that predominates when cells are grown at low aeration. Generates a proton motive force using protons and electrons from opposite sides of the membrane to generate H(2)O, transferring 1 proton/electron. The polypeptide is Cytochrome bd-I ubiquinol oxidase subunit 1 (cydA) (Escherichia coli O6:H1 (strain CFT073 / ATCC 700928 / UPEC)).